Consider the following 460-residue polypeptide: tRNA modification GTPase MnmE (460 aa).

Residues Arg-29, Glu-91, and Lys-132 each contribute to the (6S)-5-formyl-5,6,7,8-tetrahydrofolate site. The region spanning 227-383 (GISIALIGKT…LIDTIIKKCG (157 aa)) is the TrmE-type G domain. Asn-237 serves as a coordination point for K(+). Residues 237-242 (NVGKSS), 256-262 (TNIPGTT), and 281-284 (DTAG) each bind GTP. Ser-241 contacts Mg(2+). The K(+) site is built by Thr-256, Ile-258, and Thr-261. A Mg(2+)-binding site is contributed by Thr-262. (6S)-5-formyl-5,6,7,8-tetrahydrofolate is bound at residue Lys-460.

Belongs to the TRAFAC class TrmE-Era-EngA-EngB-Septin-like GTPase superfamily. TrmE GTPase family. In terms of assembly, homodimer. Heterotetramer of two MnmE and two MnmG subunits. It depends on K(+) as a cofactor.

The protein localises to the cytoplasm. Exhibits a very high intrinsic GTPase hydrolysis rate. Involved in the addition of a carboxymethylaminomethyl (cmnm) group at the wobble position (U34) of certain tRNAs, forming tRNA-cmnm(5)s(2)U34. In Prochlorococcus marinus (strain AS9601), this protein is tRNA modification GTPase MnmE.